The sequence spans 366 residues: Ribosomal RNA large subunit methyltransferase M (366 aa).

Residues S188, 221 to 224 (CPGG), D240, D260, and D277 contribute to the S-adenosyl-L-methionine site. The Proton acceptor role is filled by K306.

The protein belongs to the class I-like SAM-binding methyltransferase superfamily. RNA methyltransferase RlmE family. RlmM subfamily. As to quaternary structure, monomer.

The protein resides in the cytoplasm. The catalysed reaction is cytidine(2498) in 23S rRNA + S-adenosyl-L-methionine = 2'-O-methylcytidine(2498) in 23S rRNA + S-adenosyl-L-homocysteine + H(+). Catalyzes the 2'-O-methylation at nucleotide C2498 in 23S rRNA. The protein is Ribosomal RNA large subunit methyltransferase M of Shigella sonnei (strain Ss046).